The sequence spans 469 residues: 6-phospho-beta-galactosidase (469 aa).

5 residues coordinate D-galactose 6-phosphate: Gln19, His116, Asn159, Glu160, and Asn297. Glu160 serves as the catalytic Proton donor. Glu375 serves as the catalytic Nucleophile. The D-galactose 6-phosphate site is built by Ser428, Trp429, Lys435, and Tyr437.

Belongs to the glycosyl hydrolase 1 family.

The catalysed reaction is a 6-phospho-beta-D-galactoside + H2O = D-galactose 6-phosphate + an alcohol. Its pathway is carbohydrate metabolism; lactose degradation; D-galactose 6-phosphate and beta-D-glucose from lactose 6-phosphate: step 1/1. In Streptococcus equi subsp. zooepidemicus (strain MGCS10565), this protein is 6-phospho-beta-galactosidase.